A 346-amino-acid polypeptide reads, in one-letter code: Biotin synthase (346 aa).

One can recognise a Radical SAM core domain in the interval arginine 38–threonine 256. Cysteine 53, cysteine 57, and cysteine 60 together coordinate [4Fe-4S] cluster. Residues cysteine 97, cysteine 128, cysteine 188, and arginine 260 each coordinate [2Fe-2S] cluster.

This sequence belongs to the radical SAM superfamily. Biotin synthase family. Homodimer. Requires [4Fe-4S] cluster as cofactor. The cofactor is [2Fe-2S] cluster.

It catalyses the reaction (4R,5S)-dethiobiotin + (sulfur carrier)-SH + 2 reduced [2Fe-2S]-[ferredoxin] + 2 S-adenosyl-L-methionine = (sulfur carrier)-H + biotin + 2 5'-deoxyadenosine + 2 L-methionine + 2 oxidized [2Fe-2S]-[ferredoxin]. It functions in the pathway cofactor biosynthesis; biotin biosynthesis; biotin from 7,8-diaminononanoate: step 2/2. Its function is as follows. Catalyzes the conversion of dethiobiotin (DTB) to biotin by the insertion of a sulfur atom into dethiobiotin via a radical-based mechanism. The chain is Biotin synthase from Escherichia coli O6:K15:H31 (strain 536 / UPEC).